The chain runs to 436 residues: 5-hydroxytryptamine receptor 6 (436 aa).

The Extracellular portion of the chain corresponds to 1 to 27 (MVPEPGPVNSSTPAWGPGPPPAPGGSG). A glycan (N-linked (GlcNAc...) asparagine) is linked at Asn9. Residues 28–52 (WVAAALCVVIVLTAAANSLLIVLIC) traverse the membrane as a helical segment. The Cytoplasmic portion of the chain corresponds to 53 to 62 (TQPALRNTSN). The helical transmembrane segment at 63–88 (FFLVSLFTSDLMVGLVVMPPAMLNAL) threads the bilayer. Residues 89-96 (YGRWVLAR) are Extracellular-facing. Residues 97-122 (GLCLLWTAFDVMCCSASILNLCLISL) form a helical membrane-spanning segment. A disulfide bond links Cys99 and Cys180. Asp106 is a serotonin binding site. The Cytoplasmic segment spans residues 123–142 (DRYLLILSPLRYKLRMTAPR). A helical transmembrane segment spans residues 143 to 167 (ALALILGAWSLAALASFLPLLLGWH). Topologically, residues 168 to 185 (ELGKARTPAPGQCRLLAS) are extracellular. Residues 186–209 (LPFVLVASGVTFFLPSGAICFTYC) form a helical membrane-spanning segment. Over 210–266 (RILLAARKQAVQVASLTTGTAGQALETLQVPRTPRPGMESADSRRLATKHSRKALKA) the chain is Cytoplasmic. The chain crosses the membrane as a helical span at residues 267–293 (SLTLGILLGMFFVTWLPFFVANIAQAV). Asn288 serves as a coordination point for serotonin. At 294–299 (CDCISP) the chain is on the extracellular side. Residues 300–323 (GLFDVLTWLGYCNSTMNPIIYPLF) traverse the membrane as a helical segment. The Cytoplasmic segment spans residues 324-436 (MRDFKRALGR…RYGRIHSVPP (113 aa)).

This sequence belongs to the G-protein coupled receptor 1 family. Interacts with MTOR, RPTOR and NF1. Interacts with CDK5. In terms of tissue distribution, localized exclusively in the central nervous system, predominantly in the corpus striatum but also in various limbic and cortical regions.

Its subcellular location is the cell membrane. G-protein coupled receptor for 5-hydroxytryptamine (serotonin), a biogenic hormone that functions as a neurotransmitter, a hormone and a mitogen. Also has a high affinity for tricyclic psychotropic drugs. Ligand binding causes a conformation change that triggers signaling via guanine nucleotide-binding proteins (G proteins) and modulates the activity of downstream effectors. HTR6 is coupled to G(s) G alpha proteins and mediates activation of adenylate cyclase activity. Controls pyramidal neurons migration during corticogenesis, through the regulation of CDK5 activity. Is an activator of mTOR signaling. This is 5-hydroxytryptamine receptor 6 (Htr6) from Rattus norvegicus (Rat).